Consider the following 54-residue polypeptide: UPF0391 membrane protein msr3702 (54 aa).

Helical transmembrane passes span 4-24 (WALV…GGIA) and 30-50 (IAQI…LAGL).

It belongs to the UPF0391 family.

The protein resides in the cell membrane. The sequence is that of UPF0391 membrane protein msr3702 from Mesorhizobium japonicum (strain LMG 29417 / CECT 9101 / MAFF 303099) (Mesorhizobium loti (strain MAFF 303099)).